Here is a 377-residue protein sequence, read N- to C-terminus: DNA primase small subunit PriS (377 aa).

Active-site residues include Asp99, Asp101, and Asp274.

This sequence belongs to the eukaryotic-type primase small subunit family. In terms of assembly, heterodimer of a small subunit (PriS) and a large subunit (PriL). The cofactor is Mg(2+). Mn(2+) serves as cofactor.

Catalytic subunit of DNA primase, an RNA polymerase that catalyzes the synthesis of short RNA molecules used as primers for DNA polymerase during DNA replication. The small subunit contains the primase catalytic core and has DNA synthesis activity on its own. Binding to the large subunit stabilizes and modulates the activity, increasing the rate of DNA synthesis while decreasing the length of the DNA fragments, and conferring RNA synthesis capability. The DNA polymerase activity may enable DNA primase to also catalyze primer extension after primer synthesis. May also play a role in DNA repair. This is DNA primase small subunit PriS from Staphylothermus marinus (strain ATCC 43588 / DSM 3639 / JCM 9404 / F1).